The following is a 187-amino-acid chain: UPF0301 protein HS_0009 (187 aa).

Belongs to the UPF0301 (AlgH) family.

The protein is UPF0301 protein HS_0009 of Histophilus somni (strain 129Pt) (Haemophilus somnus).